A 375-amino-acid polypeptide reads, in one-letter code: Serpin B5 (375 aa).

4 N-linked (GlcNAc...) asparagine glycosylation sites follow: N99, N133, N188, and N361.

It belongs to the serpin family. Ov-serpin subfamily. In terms of assembly, interacts with IRF6. As to expression, normal mammary epithelial cells.

The protein localises to the secreted. The protein resides in the extracellular space. Tumor suppressor. It blocks the growth, invasion, and metastatic properties of mammary tumors. As it does not undergo the S (stressed) to R (relaxed) conformational transition characteristic of active serpins, it exhibits no serine protease inhibitory activity. The sequence is that of Serpin B5 (SERPINB5) from Homo sapiens (Human).